Consider the following 220-residue polypeptide: Meiotic nuclear division protein 1 homolog (220 aa).

Positions 76-147 (SKALHARKRR…KVEIEKYQEC (72 aa)) form a coiled coil.

It belongs to the MND1 family.

It is found in the nucleus. Functionally, required for proper homologous chromosome pairing and efficient cross-over and intragenic recombination during meiosis. Stimulates both DMC1- and RAD51-mediated homologous strand assimilation, which is required for the resolution of meiotic double-strand breaks. This Danio rerio (Zebrafish) protein is Meiotic nuclear division protein 1 homolog.